The chain runs to 773 residues: DNA polymerase (773 aa).

Residues 1–131 (MILDADYITE…IDRGLIPMEG (131 aa)) form an N-terminal domain region. The segment at 133-385 (EELRMLAFDI…ELARRTESYA (253 aa)) is exonuclease domain. The Mg(2+) site is built by D141, E143, and D315. Residues 390–773 (KEPEKGLWEN…GLGAWLKPKT (384 aa)) are polymerase domain. 2 disulfide bridges follow: C428–C442 and C506–C509.

Belongs to the DNA polymerase type-B family. Mg(2+) is required as a cofactor.

The catalysed reaction is DNA(n) + a 2'-deoxyribonucleoside 5'-triphosphate = DNA(n+1) + diphosphate. Its activity is regulated as follows. DNA polymerase activity strongly inhibited by uracil-containing oligonucleotides. Its function is as follows. Thermostable DNA polymerase. In addition to polymerase activity, this DNA polymerase exhibits 3' to 5' exonuclease activity. This chain is DNA polymerase (pol), found in Desulfurococcus sp. (strain Tok).